The chain runs to 206 residues: Dephospho-CoA kinase (206 aa).

A DPCK domain is found at 4 to 200 (IVALTGGIGS…AHYLQLASQF (197 aa)). 12 to 17 (GSGKST) lines the ATP pocket.

Belongs to the CoaE family.

Its subcellular location is the cytoplasm. The catalysed reaction is 3'-dephospho-CoA + ATP = ADP + CoA + H(+). Its pathway is cofactor biosynthesis; coenzyme A biosynthesis; CoA from (R)-pantothenate: step 5/5. In terms of biological role, catalyzes the phosphorylation of the 3'-hydroxyl group of dephosphocoenzyme A to form coenzyme A. This is Dephospho-CoA kinase from Shigella boydii serotype 4 (strain Sb227).